The primary structure comprises 395 residues: 1-deoxy-D-xylulose 5-phosphate reductoisomerase (395 aa).

5 residues coordinate NADPH: threonine 10, glycine 11, serine 12, isoleucine 13, and asparagine 123. Lysine 124 contributes to the 1-deoxy-D-xylulose 5-phosphate binding site. Glutamate 125 contacts NADPH. Aspartate 149 lines the Mn(2+) pocket. 4 residues coordinate 1-deoxy-D-xylulose 5-phosphate: serine 150, glutamate 151, serine 185, and histidine 208. Residue glutamate 151 participates in Mn(2+) binding. An NADPH-binding site is contributed by glycine 214. 1-deoxy-D-xylulose 5-phosphate is bound by residues serine 221, asparagine 226, lysine 227, and glutamate 230. Glutamate 230 is a Mn(2+) binding site.

The protein belongs to the DXR family. It depends on Mg(2+) as a cofactor. Requires Mn(2+) as cofactor.

The catalysed reaction is 2-C-methyl-D-erythritol 4-phosphate + NADP(+) = 1-deoxy-D-xylulose 5-phosphate + NADPH + H(+). Its pathway is isoprenoid biosynthesis; isopentenyl diphosphate biosynthesis via DXP pathway; isopentenyl diphosphate from 1-deoxy-D-xylulose 5-phosphate: step 1/6. Its function is as follows. Catalyzes the NADPH-dependent rearrangement and reduction of 1-deoxy-D-xylulose-5-phosphate (DXP) to 2-C-methyl-D-erythritol 4-phosphate (MEP). The polypeptide is 1-deoxy-D-xylulose 5-phosphate reductoisomerase (Shewanella sediminis (strain HAW-EB3)).